The sequence spans 411 residues: Arginase (411 aa).

Positions 83 to 106 (NNYINNNDNNNDNNNDNNNDNNNN) are disordered. Mn(2+)-binding residues include His193, Asp216, His218, and Asp220. Residues Asn222, Ser229, and Asp274 each coordinate L-arginine. Residues Asp323 and Asp325 each coordinate Mn(2+).

It belongs to the arginase family. Homotrimer; oligomerization is dependent on Mn(2+) binding. Requires Mn(2+) as cofactor.

It carries out the reaction L-arginine + H2O = urea + L-ornithine. Its pathway is nitrogen metabolism; urea cycle; L-ornithine and urea from L-arginine: step 1/1. With respect to regulation, feedback inhibition by product L-ornithine,. Inhibited by 2(S)-amino-6-boronohexanoic acid (ABH); however, with less efficiency than human ARG1. Functionally, catalyzes the hydrolysis of L-arginine into urea and L-ornithine, which is a precursor for polyamine biosynthesis. May play a role in parasite intra-hepatic development during the host liver stage. The sequence is that of Arginase from Plasmodium falciparum (isolate 3D7).